We begin with the raw amino-acid sequence, 568 residues long: Proline--tRNA ligase (568 aa).

Belongs to the class-II aminoacyl-tRNA synthetase family. ProS type 1 subfamily. Homodimer.

It localises to the cytoplasm. The catalysed reaction is tRNA(Pro) + L-proline + ATP = L-prolyl-tRNA(Pro) + AMP + diphosphate. In terms of biological role, catalyzes the attachment of proline to tRNA(Pro) in a two-step reaction: proline is first activated by ATP to form Pro-AMP and then transferred to the acceptor end of tRNA(Pro). As ProRS can inadvertently accommodate and process non-cognate amino acids such as alanine and cysteine, to avoid such errors it has two additional distinct editing activities against alanine. One activity is designated as 'pretransfer' editing and involves the tRNA(Pro)-independent hydrolysis of activated Ala-AMP. The other activity is designated 'posttransfer' editing and involves deacylation of mischarged Ala-tRNA(Pro). The misacylated Cys-tRNA(Pro) is not edited by ProRS. The chain is Proline--tRNA ligase from Listeria welshimeri serovar 6b (strain ATCC 35897 / DSM 20650 / CCUG 15529 / CIP 8149 / NCTC 11857 / SLCC 5334 / V8).